The sequence spans 157 residues: 2-C-methyl-D-erythritol 2,4-cyclodiphosphate synthase (157 aa).

Residues Asp-8 and His-10 each contribute to the a divalent metal cation site. 4-CDP-2-C-methyl-D-erythritol 2-phosphate-binding positions include 8–10 (DVH) and 34–35 (HS). A divalent metal cation is bound at residue His-42. Residues 56–58 (DIG), 61–65 (FPDTD), 100–106 (AQAPKML), 132–135 (TTTE), Phe-139, and Arg-142 contribute to the 4-CDP-2-C-methyl-D-erythritol 2-phosphate site.

Belongs to the IspF family. As to quaternary structure, homotrimer. Requires a divalent metal cation as cofactor.

The catalysed reaction is 4-CDP-2-C-methyl-D-erythritol 2-phosphate = 2-C-methyl-D-erythritol 2,4-cyclic diphosphate + CMP. It functions in the pathway isoprenoid biosynthesis; isopentenyl diphosphate biosynthesis via DXP pathway; isopentenyl diphosphate from 1-deoxy-D-xylulose 5-phosphate: step 4/6. Its function is as follows. Involved in the biosynthesis of isopentenyl diphosphate (IPP) and dimethylallyl diphosphate (DMAPP), two major building blocks of isoprenoid compounds. Catalyzes the conversion of 4-diphosphocytidyl-2-C-methyl-D-erythritol 2-phosphate (CDP-ME2P) to 2-C-methyl-D-erythritol 2,4-cyclodiphosphate (ME-CPP) with a corresponding release of cytidine 5-monophosphate (CMP). The sequence is that of 2-C-methyl-D-erythritol 2,4-cyclodiphosphate synthase from Erwinia tasmaniensis (strain DSM 17950 / CFBP 7177 / CIP 109463 / NCPPB 4357 / Et1/99).